The following is a 277-amino-acid chain: Bis(5'-nucleosyl)-tetraphosphatase, symmetrical (277 aa).

This sequence belongs to the Ap4A hydrolase family.

It catalyses the reaction P(1),P(4)-bis(5'-adenosyl) tetraphosphate + H2O = 2 ADP + 2 H(+). In terms of biological role, hydrolyzes diadenosine 5',5'''-P1,P4-tetraphosphate to yield ADP. This Bordetella pertussis (strain Tohama I / ATCC BAA-589 / NCTC 13251) protein is Bis(5'-nucleosyl)-tetraphosphatase, symmetrical.